Reading from the N-terminus, the 445-residue chain is TNF receptor-associated factor family protein DDB_G0290971 (445 aa).

The segment at 23–67 (CPICFDLYYSSSSKKEVFQCRDGHLACKSCWSDSLLNKKECMICR) adopts an RING-type; degenerate zinc-finger fold. 2 consecutive TRAF-type zinc fingers follow at residues 133 to 186 (KHQV…QLDA) and 186 to 242 (AHAL…ESID). The stretch at 269 to 307 (QLELVECKNQIYQINNKYEKLLERVIKLEQLSMDASNKL) forms a coiled coil. Residues 314–441 (KNSIIFATFS…EDKLVIGLRI (128 aa)) enclose the MATH domain.

This sequence belongs to the TNF receptor-associated factor family. A subfamily.

The protein resides in the cytoplasm. Probable adapter protein and signal transducer that links members of the tumor necrosis factor receptor family to different signaling pathways by association with the receptor cytoplasmic domain and kinases. The protein is TNF receptor-associated factor family protein DDB_G0290971 of Dictyostelium discoideum (Social amoeba).